Consider the following 375-residue polypeptide: Queuine tRNA-ribosyltransferase (375 aa).

The active-site Proton acceptor is aspartate 90. Residues 90–94 (DSGGF), aspartate 144, glutamine 193, and glycine 220 each bind substrate. Residues 251–257 (GVGTPED) are RNA binding. Aspartate 270 (nucleophile) is an active-site residue. The interval 275–279 (TRNAR) is RNA binding; important for wobble base 34 recognition. The Zn(2+) site is built by cysteine 308, cysteine 310, cysteine 313, and histidine 339.

This sequence belongs to the queuine tRNA-ribosyltransferase family. In terms of assembly, homodimer. Within each dimer, one monomer is responsible for RNA recognition and catalysis, while the other monomer binds to the replacement base PreQ1. The cofactor is Zn(2+).

It catalyses the reaction 7-aminomethyl-7-carbaguanine + guanosine(34) in tRNA = 7-aminomethyl-7-carbaguanosine(34) in tRNA + guanine. It functions in the pathway tRNA modification; tRNA-queuosine biosynthesis. Catalyzes the base-exchange of a guanine (G) residue with the queuine precursor 7-aminomethyl-7-deazaguanine (PreQ1) at position 34 (anticodon wobble position) in tRNAs with GU(N) anticodons (tRNA-Asp, -Asn, -His and -Tyr). Catalysis occurs through a double-displacement mechanism. The nucleophile active site attacks the C1' of nucleotide 34 to detach the guanine base from the RNA, forming a covalent enzyme-RNA intermediate. The proton acceptor active site deprotonates the incoming PreQ1, allowing a nucleophilic attack on the C1' of the ribose to form the product. After dissociation, two additional enzymatic reactions on the tRNA convert PreQ1 to queuine (Q), resulting in the hypermodified nucleoside queuosine (7-(((4,5-cis-dihydroxy-2-cyclopenten-1-yl)amino)methyl)-7-deazaguanosine). This chain is Queuine tRNA-ribosyltransferase, found in Methylibium petroleiphilum (strain ATCC BAA-1232 / LMG 22953 / PM1).